Consider the following 114-residue polypeptide: Ribonuclease P protein component (114 aa).

It belongs to the RnpA family. In terms of assembly, consists of a catalytic RNA component (M1 or rnpB) and a protein subunit.

The catalysed reaction is Endonucleolytic cleavage of RNA, removing 5'-extranucleotides from tRNA precursor.. RNaseP catalyzes the removal of the 5'-leader sequence from pre-tRNA to produce the mature 5'-terminus. It can also cleave other RNA substrates such as 4.5S RNA. The protein component plays an auxiliary but essential role in vivo by binding to the 5'-leader sequence and broadening the substrate specificity of the ribozyme. This is Ribonuclease P protein component from Limosilactobacillus fermentum (strain NBRC 3956 / LMG 18251) (Lactobacillus fermentum).